The primary structure comprises 500 residues: NAD(P)H-quinone oxidoreductase chain 4, chloroplastic (500 aa).

Transmembrane regions (helical) follow at residues 4-24 (FPWL…MLFL), 35-55 (YTIC…CYNF), 87-107 (IGTI…AFPV), 113-130 (LFHF…GSFS), 134-154 (LLLF…LLAM), 167-187 (FILY…GISL), 211-231 (ILFY…IPLH), 242-262 (HYST…YGLV), 272-292 (AHSM…IYAA), 305-325 (IAYS…SITD), 330-350 (GAIL…FLAG), 364-384 (MGGM…LSMA), 386-406 (LALP…GIIT), 411-431 (FLIF…LTPI), and 462-482 (LFLS…PDFV).

This sequence belongs to the complex I subunit 4 family.

It is found in the plastid. The protein resides in the chloroplast thylakoid membrane. The catalysed reaction is a plastoquinone + NADH + (n+1) H(+)(in) = a plastoquinol + NAD(+) + n H(+)(out). It catalyses the reaction a plastoquinone + NADPH + (n+1) H(+)(in) = a plastoquinol + NADP(+) + n H(+)(out). In Capsella bursa-pastoris (Shepherd's purse), this protein is NAD(P)H-quinone oxidoreductase chain 4, chloroplastic.